Consider the following 118-residue polypeptide: Large ribosomal subunit protein bL20c (118 aa).

This sequence belongs to the bacterial ribosomal protein bL20 family.

Its subcellular location is the plastid. In terms of biological role, binds directly to 23S ribosomal RNA and is necessary for the in vitro assembly process of the 50S ribosomal subunit. It is not involved in the protein synthesizing functions of that subunit. The polypeptide is Large ribosomal subunit protein bL20c (Aneura mirabilis (Parasitic liverwort)).